Here is a 393-residue protein sequence, read N- to C-terminus: Formate-dependent phosphoribosylglycinamide formyltransferase (393 aa).

N(1)-(5-phospho-beta-D-ribosyl)glycinamide contacts are provided by residues 22-23 (EL) and Glu82. ATP is bound by residues Arg114, Lys155, 160–165 (SSGKGQ), 195–198 (EGFI), and Glu203. Residues 119–308 (RLAAEELDLP…QFALHARAIL (190 aa)) enclose the ATP-grasp domain. Mg(2+)-binding residues include Glu267 and Glu279. N(1)-(5-phospho-beta-D-ribosyl)glycinamide is bound by residues Asp286, Lys356, and 363–364 (RR).

It belongs to the PurK/PurT family. As to quaternary structure, homodimer.

It carries out the reaction N(1)-(5-phospho-beta-D-ribosyl)glycinamide + formate + ATP = N(2)-formyl-N(1)-(5-phospho-beta-D-ribosyl)glycinamide + ADP + phosphate + H(+). The protein operates within purine metabolism; IMP biosynthesis via de novo pathway; N(2)-formyl-N(1)-(5-phospho-D-ribosyl)glycinamide from N(1)-(5-phospho-D-ribosyl)glycinamide (formate route): step 1/1. Involved in the de novo purine biosynthesis. Catalyzes the transfer of formate to 5-phospho-ribosyl-glycinamide (GAR), producing 5-phospho-ribosyl-N-formylglycinamide (FGAR). Formate is provided by PurU via hydrolysis of 10-formyl-tetrahydrofolate. The protein is Formate-dependent phosphoribosylglycinamide formyltransferase of Pseudomonas fluorescens (strain Pf0-1).